Reading from the N-terminus, the 78-residue chain is Large ribosomal subunit protein bL28 (78 aa).

It belongs to the bacterial ribosomal protein bL28 family.

The chain is Large ribosomal subunit protein bL28 from Acidithiobacillus ferrooxidans (strain ATCC 23270 / DSM 14882 / CIP 104768 / NCIMB 8455) (Ferrobacillus ferrooxidans (strain ATCC 23270)).